The following is a 245-amino-acid chain: Eukaryotic translation initiation factor 4E type 2 (245 aa).

A compositionally biased stretch (basic and acidic residues) spans 1–38 (MNNKFDALKDDDSGDHDQNEENSTQKDGEKEKTDRDKS). The interval 1–52 (MNNKFDALKDDDSGDHDQNEENSTQKDGEKEKTDRDKSQSSGKRKAVVPGPA) is disordered. Phosphoserine is present on Ser13. The EIF4EBP1/2/3 binding stretch occupies residues 54-57 (HPLQ). Position 78-79 (78-79 (YE)) interacts with mRNA. The interval 95–99 (WKFYS) is EIF4EBP1/2/3 binding. MRNA-binding positions include His110 and 124-125 (WE). Position 134 is an N6-acetyllysine; alternate (Lys134). A Glycyl lysine isopeptide (Lys-Gly) (interchain with G-Cter in ISG15); alternate cross-link involves residue Lys134. The interval 150–157 (NLILAMLG) is EIF4EBP1/2/3 binding. Residues 174–179 (RFQEDI) and 222–224 (KMP) contribute to the mRNA site. A Glycyl lysine isopeptide (Lys-Gly) (interchain with G-Cter in ISG15) cross-link involves residue Lys222.

This sequence belongs to the eukaryotic initiation factor 4E family. Interacts with EIF4EBP1, EIF4EBP2 and EIF4EBP3. Does not interact with eIF4G (EIF4G1, EIF4G2 or EIF4G3). Component of the 4EHP-GYF2 complex, at least composed of EIF4E2, GIGYF2 and ZNF598. Interacts with GIGYF2 (via the 4EHP-binding motif); the interaction is direct. Interacts with EIF4ENIF1/4E-T (via YXXXXLphi motif); increasing affinity for the 7-methylguanosine-containing mRNA cap. Ubiquitinated by ARIH1. The consequences of ubiquitination are however unclear: according to a report, EIF4E2 ubiquitination leads to promote EIF4E2 cap-binding and protein translation arrest. According to another report ubiquitination leads to its subsequent degradation. In terms of processing, ISGylation enhances its cap structure-binding activity and translation-inhibition activity. Widely expressed with highest levels in testis, kidney and liver.

Its subcellular location is the cytoplasm. It is found in the P-body. Recognizes and binds the 7-methylguanosine-containing mRNA cap during an early step in the initiation. Acts as a repressor of translation initiation. In contrast to EIF4E, it is unable to bind eIF4G (EIF4G1, EIF4G2 or EIF4G3), suggesting that it acts by competing with EIF4E and block assembly of eIF4F at the cap. In P-bodies, component of a complex that promotes miRNA-mediated translational repression. Involved in virus-induced host response by mediating miRNA MIR34A-induced translational silencing which controls IFNB1 production by a negative feedback mechanism. In terms of biological role, component of the 4EHP-GYF2 complex, a multiprotein complex that acts as a repressor of translation initiation. In association with GIGYF2, assists ribosome-associated quality control (RQC) by sequestering the mRNA cap, blocking ribosome initiation and decreasing the translational load on problematic messages. Part of a pathway that works in parallel to RQC-mediated degradation of the stalled nascent polypeptide. GIGYF2 and EIF4E2 work downstream and independently of ZNF598, which seems to work as a scaffold that can recruit them to faulty mRNA even if alternative recruitment mechanisms may exist. In Mus musculus (Mouse), this protein is Eukaryotic translation initiation factor 4E type 2.